The chain runs to 127 residues: Holo-[acyl-carrier-protein] synthase (127 aa).

Mg(2+)-binding residues include Asp9 and Glu58.

This sequence belongs to the P-Pant transferase superfamily. AcpS family. Mg(2+) serves as cofactor.

It localises to the cytoplasm. The enzyme catalyses apo-[ACP] + CoA = holo-[ACP] + adenosine 3',5'-bisphosphate + H(+). Functionally, transfers the 4'-phosphopantetheine moiety from coenzyme A to a Ser of acyl-carrier-protein. This chain is Holo-[acyl-carrier-protein] synthase, found in Shewanella sp. (strain ANA-3).